The following is a 232-amino-acid chain: uncharacterized protein (232 aa).

The disordered stretch occupies residues 1-71; the sequence is MSNPTIEGDE…KENERIKNDD (71 aa). The segment covering 25–38 has biased composition (acidic residues); it reads DDLDDLDDILDDLD. Residues 44–71 are compositionally biased toward basic and acidic residues; the sequence is KNEEKKNIDEHKQTGNTSKENERIKNDD.

This is an uncharacterized protein from Schizosaccharomyces pombe (strain 972 / ATCC 24843) (Fission yeast).